Reading from the N-terminus, the 245-residue chain is Lactate utilization protein A 1 (245 aa).

Belongs to the LutA/YkgE family.

Is involved in L-lactate degradation and allows cells to grow with lactate as the sole carbon source. In Bacillus mycoides (strain KBAB4) (Bacillus weihenstephanensis), this protein is Lactate utilization protein A 1.